The sequence spans 242 residues: Zinc-finger homeodomain protein 11 (242 aa).

The ZF-HD dimerization-type; degenerate zinc finger occupies 31 to 82 (YKECLKNHAANLGGHALDGCGEFMPSPTATSTDPSSLRCAACGCHRNFHRRD). Disordered stretches follow at residues 83–109 (PSENLNFLTAPPISSPSGTESPPSRHV) and 135–161 (PGPSDQDPTVVRSENSSRGAMRKRTRT). The segment at residues 156 to 213 (RKRTRTKFTPEQKIKMRAFAEKAGWKINGCDEKSVREFCNEVGIERGVLKVWMHNNKY) is a DNA-binding region (homeobox; atypical).

Homo- and heterodimer with other ZFHD proteins. Interacts with HIPP20, HIPP21, HIPP22, HIPP23, HIPP24, HIPP26, HIPP27, HIPP30 and MED25 (via ACID domain). Interacts with NAC019, NAC055 and NAC072 (via NAC binding domain). Binds to ZHD1, ZHD2, ZHD3, ZHD4, ZHD5, ZHD6, ZHD7, ZHD8, ZHD9, ZHD12, ZHD13 and ZHD14. Expressed in roots, inflorescences, open flowers and seeds. Detected in stems and seedlings.

It is found in the nucleus. Its function is as follows. Transcription factor involved in the up-regulation of several stress-inducible genes. Acts as a transcriptional activator by interacting with MED25 and NAC proteins. Involved in increased drought tolerance. The polypeptide is Zinc-finger homeodomain protein 11 (ZHD11) (Arabidopsis thaliana (Mouse-ear cress)).